The sequence spans 1049 residues: RIMS-binding protein 2 (1049 aa).

An SH3 1 domain is found at 164-231 (GKVHLCVARY…PSNFVDFIQD (68 aa)). Fibronectin type-III domains follow at residues 294–387 (VPYP…GKDV), 390–471 (APSQ…EKDE), and 486–587 (PPQD…VPPA). Disordered regions lie at residues 580-664 (PDLL…VSTT), 694-714 (SAGP…EVKR), and 728-750 (LGQQ…GSDL). Residues 582–598 (LLVPPAPHPRTAPPPKP) are compositionally biased toward pro residues. The span at 603–616 (MDTKDLGPHVKVDE) shows a compositional bias: basic and acidic residues. Residues 641–651 (GPGRRSPSPSR) show a composition bias toward low complexity. Phosphoserine is present on residues S701 and S709. Residues 735-746 (CHGDEYHTESSR) show a composition bias toward basic and acidic residues. Phosphoserine occurs at positions 832 and 839. T841 bears the Phosphothreonine mark. 2 SH3 domains span residues 848-916 (LPAR…EIHA) and 952-1019 (VPTR…EVPD). The interval 1024–1049 (HLSDAPPHYSHDPPMRTKAKRVSQPP) is disordered. A compositionally biased stretch (basic residues) spans 1040-1049 (TKAKRVSQPP).

This sequence belongs to the RIMBP family. As to quaternary structure, interacts with CACNA1D and CACNA1B, and potentially with other Ca(2+) channel alpha-1 isoforms. Interacts with RIMS1 and RIMS2.

The protein localises to the cell membrane. The protein resides in the synapse. Functionally, plays a role in the synaptic transmission as bifunctional linker that interacts simultaneously with RIMS1, RIMS2, CACNA1D and CACNA1B. The sequence is that of RIMS-binding protein 2 (Rimbp2) from Rattus norvegicus (Rat).